Consider the following 109-residue polypeptide: Nucleoid-associated protein Plut_1285 (109 aa).

Belongs to the YbaB/EbfC family. In terms of assembly, homodimer.

The protein resides in the cytoplasm. Its subcellular location is the nucleoid. In terms of biological role, binds to DNA and alters its conformation. May be involved in regulation of gene expression, nucleoid organization and DNA protection. This is Nucleoid-associated protein Plut_1285 from Chlorobium luteolum (strain DSM 273 / BCRC 81028 / 2530) (Pelodictyon luteolum).